The following is a 133-amino-acid chain: Large ribosomal subunit protein uL22c (133 aa).

It belongs to the universal ribosomal protein uL22 family. As to quaternary structure, part of the 50S ribosomal subunit.

The protein resides in the plastid. The protein localises to the chloroplast. This protein binds specifically to 23S rRNA. In terms of biological role, the globular domain of the protein is located near the polypeptide exit tunnel on the outside of the subunit, while an extended beta-hairpin is found that lines the wall of the exit tunnel in the center of the 70S ribosome. This Manihot esculenta (Cassava) protein is Large ribosomal subunit protein uL22c (rpl22).